The primary structure comprises 513 residues: tRNA A64-2'-O-ribosylphosphate transferase (513 aa).

Its function is as follows. tRNA backbone modifying enzyme that mediates initiator/ elongator tRNA discrimination. This enzyme modifies exclusively the initiator tRNA in position 64 using 5'-phosphoribosyl-1'-pyrophosphate as the modification donor. Recognize the stem-loop IV region that is unique in eukaryotic cytoplasmic initiator tRNAs. This chain is tRNA A64-2'-O-ribosylphosphate transferase (RIT1), found in Saccharomyces cerevisiae (strain ATCC 204508 / S288c) (Baker's yeast).